The chain runs to 152 residues: Large ribosomal subunit protein uL15 (152 aa).

The segment covering 1–13 (MLTLGNLSPQEGS) has biased composition (polar residues). Residues 1–62 (MLTLGNLSPQ…GGQMPLQRRL (62 aa)) are disordered. Over residues 31–40 (TAGRGHKGFK) the composition is skewed to basic residues.

It belongs to the universal ribosomal protein uL15 family. Part of the 50S ribosomal subunit.

Its function is as follows. Binds to the 23S rRNA. This is Large ribosomal subunit protein uL15 from Desulfotalea psychrophila (strain LSv54 / DSM 12343).